Reading from the N-terminus, the 335-residue chain is Mevalonate kinase (335 aa).

111-121 (PVGAGLGSSAA) contacts ATP. The active-site Proton acceptor is the Asp162.

Belongs to the GHMP kinase family. Mevalonate kinase subfamily. In terms of assembly, homodimer. Mg(2+) serves as cofactor.

It is found in the cytoplasm. The enzyme catalyses (R)-mevalonate + ATP = (R)-5-phosphomevalonate + ADP + H(+). Its pathway is isoprenoid biosynthesis; isopentenyl diphosphate biosynthesis via mevalonate pathway; isopentenyl diphosphate from (R)-mevalonate: step 1/3. Catalyzes the phosphorylation of (R)-mevalonate (MVA) to (R)-mevalonate 5-phosphate (MVAP). Functions in the mevalonate (MVA) pathway leading to isopentenyl diphosphate (IPP), a key precursor for the biosynthesis of isoprenoid compounds such as archaeal membrane lipids. This chain is Mevalonate kinase, found in Pyrococcus horikoshii (strain ATCC 700860 / DSM 12428 / JCM 9974 / NBRC 100139 / OT-3).